The sequence spans 108 residues: UPF0102 protein WS0451 (108 aa).

It belongs to the UPF0102 family.

The protein is UPF0102 protein WS0451 of Wolinella succinogenes (strain ATCC 29543 / DSM 1740 / CCUG 13145 / JCM 31913 / LMG 7466 / NCTC 11488 / FDC 602W) (Vibrio succinogenes).